Here is a 309-residue protein sequence, read N- to C-terminus: Prepilin leader peptidase/N-methyltransferase (309 aa).

A helical membrane pass occupies residues 35 to 55; the sequence is MQLAFAIVLGLVVGSFINVVV. C96, C99, C121, and C124 together coordinate Zn(2+). The next 6 membrane-spanning stretches (helical) occupy residues 147–167, 183–203, 207–227, 230–250, 253–273, and 288–308; these read LALF…AALL, LTLP…FASL, VIGA…FKLL, IEGI…WLGW, LPQV…VATW, and FLAA…LLLG.

This sequence belongs to the peptidase A24 family. Zn(2+) is required as a cofactor.

It localises to the cell inner membrane. The enzyme catalyses Typically cleaves a -Gly-|-Phe- bond to release an N-terminal, basic peptide of 5-8 residues from type IV prepilin, and then N-methylates the new N-terminal amino group, the methyl donor being S-adenosyl-L-methionine.. Functionally, plays an essential role in type IV pili and type II pseudopili formation by proteolytically removing the leader sequence from substrate proteins and subsequently monomethylating the alpha-amino group of the newly exposed N-terminal phenylalanine. The polypeptide is Prepilin leader peptidase/N-methyltransferase (gspO) (Burkholderia pseudomallei (strain K96243)).